The chain runs to 557 residues: MAFNKRSRNITQGVARSPNRSMYYALGYQKEDFDKPMVGIANGHSTITPCNAGLQRLADAAIDAVKASDANPQVFGTPTISDGMSMGTEGMKYSLISREVIADCIETAAQGQWMDGVVVIGGCDKNMPGGMIALARTNVPGIYVYGGTIKPGNWKGKDLTIVSSFEAVGEFTAGRMSEEDFEGVERNACPSTGSCGGMYTANTMSSSFEALGMSLLYSSTMANPDQEKVDSAAESARVLVEAIKKDIKPRDIITRKSIENAVALIMATGGSTNAVLHYLAIAHSAEVEWTIDDFERIRRKVPVICNLKPSGQYVATDLHKAGGIPQVMKILLKAGLLHGDCLTITGRTLAEELEHVPDQPRADQDVIMPIEKALYAEGHLAILKGNLAEEGAVAKITGLKNPVITGPARVFEDEQSAMEAILADKINAGDVLVLRYLGPKGGPGMPEMLAPTSAIIGKGLGESVGFITDGRFSGGTWGMVVGHVAPEAYVGGNIALVREGDSITIDAHKLVLQVNVSDEELARRRAEWKQPVARYTRGVLAKFARLASTASKGAVTD.

C50 lines the [2Fe-2S] cluster pocket. D82 lines the Mg(2+) pocket. A [2Fe-2S] cluster-binding site is contributed by C123. Positions 124 and 125 each coordinate Mg(2+). K125 is modified (N6-carboxylysine). C195 serves as a coordination point for [2Fe-2S] cluster. A Mg(2+)-binding site is contributed by E447. Catalysis depends on S473, which acts as the Proton acceptor.

It belongs to the IlvD/Edd family. As to quaternary structure, homodimer. Requires [2Fe-2S] cluster as cofactor. It depends on Mg(2+) as a cofactor.

The catalysed reaction is (2R)-2,3-dihydroxy-3-methylbutanoate = 3-methyl-2-oxobutanoate + H2O. It catalyses the reaction (2R,3R)-2,3-dihydroxy-3-methylpentanoate = (S)-3-methyl-2-oxopentanoate + H2O. It participates in amino-acid biosynthesis; L-isoleucine biosynthesis; L-isoleucine from 2-oxobutanoate: step 3/4. It functions in the pathway amino-acid biosynthesis; L-valine biosynthesis; L-valine from pyruvate: step 3/4. Its function is as follows. Functions in the biosynthesis of branched-chain amino acids. Catalyzes the dehydration of (2R,3R)-2,3-dihydroxy-3-methylpentanoate (2,3-dihydroxy-3-methylvalerate) into 2-oxo-3-methylpentanoate (2-oxo-3-methylvalerate) and of (2R)-2,3-dihydroxy-3-methylbutanoate (2,3-dihydroxyisovalerate) into 2-oxo-3-methylbutanoate (2-oxoisovalerate), the penultimate precursor to L-isoleucine and L-valine, respectively. The protein is Dihydroxy-acid dehydratase 1 of Cupriavidus pinatubonensis (strain JMP 134 / LMG 1197) (Cupriavidus necator (strain JMP 134)).